Consider the following 1939-residue polypeptide: Myosin-4 (1939 aa).

The Myosin N-terminal SH3-like domain maps to 33–82; sequence DAKTSVFVVDPKESYVKAIVQSREGGKVTAKTEAGATVTVKEDQVFSMNP. Phosphothreonine occurs at positions 64 and 69. Ser-79 carries the post-translational modification Phosphoserine. In terms of domain architecture, Myosin motor spans 86–782; it reads DKIEDMAMMT…LLGTLEEMRD (697 aa). The residue at position 130 (Lys-130) is an N6,N6,N6-trimethyllysine. 179–186 is a binding site for ATP; it reads GESGAGKT. At Tyr-389 the chain carries Phosphotyrosine. The residue at position 391 (Thr-391) is a Phosphothreonine. Ser-392 is subject to Phosphoserine. Thr-419 is modified (phosphothreonine). Residue Tyr-424 is modified to Phosphotyrosine. Ser-625 bears the Phosphoserine mark. Residues 659-681 form an actin-binding region; it reads LNKLMTNLRSTHPHFVRCIIPNE. His-757 carries the pros-methylhistidine modification. The actin-binding stretch occupies residues 761–775; that stretch reads KFGHTKVFFKAGLLG. Thr-776 bears the Phosphothreonine mark. Residues 785 to 814 form the IQ domain; that stretch reads LAQLITRTQAICRGFLMRVEFRKMMERRES. The stretch at 843-1939 forms a coiled coil; it reads LLKSAETEKE…EVHTKVISEE (1097 aa). Residues Ser-1092, Ser-1162, and Ser-1237 each carry the phosphoserine modification. Thr-1241 carries the phosphothreonine modification. The residue at position 1243 (Ser-1243) is a Phosphoserine. Thr-1255 carries the post-translational modification Phosphothreonine. Ser-1261 carries the post-translational modification Phosphoserine. Residue Thr-1265 is modified to Phosphothreonine. Ser-1278 is subject to Phosphoserine. Thr-1286 bears the Phosphothreonine mark. Ser-1288, Ser-1292, Ser-1303, Ser-1306, and Ser-1413 each carry phosphoserine. A Phosphotyrosine modification is found at Tyr-1464. Thr-1467 carries the post-translational modification Phosphothreonine. Position 1474 is a phosphoserine (Ser-1474). Position 1492 is a phosphotyrosine (Tyr-1492). Ser-1495 carries the phosphoserine modification. Thr-1501 is subject to Phosphothreonine. A Phosphoserine modification is found at Ser-1514. Thr-1517 carries the post-translational modification Phosphothreonine. Phosphoserine occurs at positions 1542, 1547, 1554, 1574, 1600, 1603, 1714, and 1726. Thr-1730 and Thr-1736 each carry phosphothreonine. Residue Ser-1739 is modified to Phosphoserine.

The protein belongs to the TRAFAC class myosin-kinesin ATPase superfamily. Myosin family. As to quaternary structure, muscle myosin is a hexameric protein that consists of 2 heavy chain subunits (MHC), 2 alkali light chain subunits (MLC) and 2 regulatory light chain subunits (MLC-2).

Its subcellular location is the cytoplasm. The protein localises to the myofibril. Muscle contraction. The protein is Myosin-4 (MYH4) of Homo sapiens (Human).